Consider the following 148-residue polypeptide: Urease accessory protein UreE (148 aa).

Belongs to the UreE family.

It localises to the cytoplasm. In terms of biological role, involved in urease metallocenter assembly. Binds nickel. Probably functions as a nickel donor during metallocenter assembly. The sequence is that of Urease accessory protein UreE from Halalkalibacterium halodurans (strain ATCC BAA-125 / DSM 18197 / FERM 7344 / JCM 9153 / C-125) (Bacillus halodurans).